Consider the following 91-residue polypeptide: Alpha-latrotoxin associated low molecular weight protein SGV150-311 (91 aa).

Positions 1–18 (MNVLHFLILLMSVVSVFC) are cleaved as a signal peptide.

Belongs to the arthropod CHH/MIH/GIH/VIH hormone family. As to expression, expressed by the venom gland.

Its subcellular location is the secreted. Its function is as follows. May increase the toxicity of alpha-latrotoxin and/or other venom components. Is non-toxic to mice and to the cockroach Periplaneta americana. This chain is Alpha-latrotoxin associated low molecular weight protein SGV150-311, found in Steatoda grossa (False black widow).